The following is a 498-amino-acid chain: Probable cytosol aminopeptidase (498 aa).

Mn(2+)-binding residues include lysine 264 and aspartate 269. The active site involves lysine 276. Residues aspartate 287, aspartate 346, and glutamate 348 each contribute to the Mn(2+) site. Residue arginine 350 is part of the active site.

Belongs to the peptidase M17 family. Mn(2+) serves as cofactor.

The protein resides in the cytoplasm. The catalysed reaction is Release of an N-terminal amino acid, Xaa-|-Yaa-, in which Xaa is preferably Leu, but may be other amino acids including Pro although not Arg or Lys, and Yaa may be Pro. Amino acid amides and methyl esters are also readily hydrolyzed, but rates on arylamides are exceedingly low.. The enzyme catalyses Release of an N-terminal amino acid, preferentially leucine, but not glutamic or aspartic acids.. In terms of biological role, presumably involved in the processing and regular turnover of intracellular proteins. Catalyzes the removal of unsubstituted N-terminal amino acids from various peptides. This is Probable cytosol aminopeptidase from Rhizobium rhizogenes (strain K84 / ATCC BAA-868) (Agrobacterium radiobacter).